A 261-amino-acid chain; its full sequence is Large ribosomal subunit protein uL10m (261 aa).

The N-terminal 28 residues, 1–28 (MAAAVAGMLRGGLLPQAGRLPTLQTVRY), are a transit peptide targeting the mitochondrion. The interval 242–261 (EKDSVMSANGKPDPDTVPDS) is disordered.

It belongs to the universal ribosomal protein uL10 family. Component of the mitochondrial large ribosomal subunit (mt-LSU). Mature mammalian 55S mitochondrial ribosomes consist of a small (28S) and a large (39S) subunit. The 28S small subunit contains a 12S ribosomal RNA (12S mt-rRNA) and 30 different proteins. The 39S large subunit contains a 16S rRNA (16S mt-rRNA), a copy of mitochondrial valine transfer RNA (mt-tRNA(Val)), which plays an integral structural role, and 52 different proteins. uL10m contributes a single cysteine residue to a zinc-binding site with mL66.

Its subcellular location is the mitochondrion. The protein is Large ribosomal subunit protein uL10m (MRPL10) of Homo sapiens (Human).